Reading from the N-terminus, the 262-residue chain is Hydroxyethylthiazole kinase (262 aa).

Residue M50 coordinates substrate. 2 residues coordinate ATP: R125 and T171. Residue G198 participates in substrate binding.

It belongs to the Thz kinase family. Requires Mg(2+) as cofactor.

It carries out the reaction 5-(2-hydroxyethyl)-4-methylthiazole + ATP = 4-methyl-5-(2-phosphooxyethyl)-thiazole + ADP + H(+). Its pathway is cofactor biosynthesis; thiamine diphosphate biosynthesis; 4-methyl-5-(2-phosphoethyl)-thiazole from 5-(2-hydroxyethyl)-4-methylthiazole: step 1/1. Its function is as follows. Catalyzes the phosphorylation of the hydroxyl group of 4-methyl-5-beta-hydroxyethylthiazole (THZ). The protein is Hydroxyethylthiazole kinase of Escherichia coli O81 (strain ED1a).